We begin with the raw amino-acid sequence, 100 residues long: MVSLHSYLILSAILFSIGTIGVLIRRNAIVIFMCVEMMLNSVNLTFIALSKHLGNVDGQIFVFFVMTVAAAEAAVGLALMIAFYKNRESIDVEDIKLMRL.

Helical transmembrane passes span 4–24 (LHSY…GVLI), 29–49 (IVIF…FIAL), and 60–80 (IFVF…LALM).

This sequence belongs to the complex I subunit 4L family. NDH-1 is composed of 14 different subunits. Subunits NuoA, H, J, K, L, M, N constitute the membrane sector of the complex.

Its subcellular location is the cell inner membrane. It carries out the reaction a quinone + NADH + 5 H(+)(in) = a quinol + NAD(+) + 4 H(+)(out). NDH-1 shuttles electrons from NADH, via FMN and iron-sulfur (Fe-S) centers, to quinones in the respiratory chain. The immediate electron acceptor for the enzyme in this species is believed to be ubiquinone. Couples the redox reaction to proton translocation (for every two electrons transferred, four hydrogen ions are translocated across the cytoplasmic membrane), and thus conserves the redox energy in a proton gradient. In Geobacter metallireducens (strain ATCC 53774 / DSM 7210 / GS-15), this protein is NADH-quinone oxidoreductase subunit K 2.